Reading from the N-terminus, the 73-residue chain is ATP synthase subunit 9, mitochondrial (73 aa).

Helical transmembrane passes span 12-32 and 50-70; these read VAAL…AALI and ILGF…SFLL.

This sequence belongs to the ATPase C chain family. F-type ATPases have 2 components, CF(1) - the catalytic core - and CF(0) - the membrane proton channel. CF(1) has five subunits: alpha(3), beta(3), gamma(1), delta(1), epsilon(1). CF(0) has three main subunits: a, b and c.

The protein localises to the mitochondrion inner membrane. In terms of biological role, mitochondrial membrane ATP synthase (F(1)F(0) ATP synthase or Complex V) produces ATP from ADP in the presence of a proton gradient across the membrane which is generated by electron transport complexes of the respiratory chain. F-type ATPases consist of two structural domains, F(1) - containing the extramembraneous catalytic core and F(0) - containing the membrane proton channel, linked together by a central stalk and a peripheral stalk. During catalysis, ATP synthesis in the catalytic domain of F(1) is coupled via a rotary mechanism of the central stalk subunits to proton translocation. Part of the complex F(0) domain. A homomeric c-ring of probably 10 subunits is part of the complex rotary element. The sequence is that of ATP synthase subunit 9, mitochondrial (ATP9) from Mycosarcoma maydis (Corn smut fungus).